Consider the following 354-residue polypeptide: AT-hook motif nuclear-localized protein 11 (354 aa).

Disordered regions lie at residues 1 to 158 (MDRR…MMPS) and 290 to 354 (KREE…LMRG). Low complexity-rich tracts occupy residues 46–55 (NSISPFGSNP) and 75–96 (VDSS…PPSG). The Bipartite nuclear localization signal motif lies at 101 to 109 (KRKRGRPRK). Positions 101 to 113 (KRKRGRPRKYGQD) form a DNA-binding region, a.T hook 1. Residues 122–133 (SPSISNVSPNSN) are compositionally biased toward low complexity. Residues 134-146 (KRGRGRPPGSGKK) constitute a DNA-binding region (a.T hook 2). The PPC domain occupies 159–302 (STGMSFTPHV…ETSEDVQDTD (144 aa)). Over residues 294-303 (TSEDVQDTDA) the composition is skewed to acidic residues. Over residues 304 to 327 (LENNNDNTAATSPPVPQQSQNIVQ) the composition is skewed to polar residues. Residues 340–354 (MDMHHPHMDIDLMRG) are compositionally biased toward basic and acidic residues.

The protein resides in the nucleus. Its function is as follows. Transcription factor that specifically binds AT-rich DNA sequences related to the nuclear matrix attachment regions (MARs). The protein is AT-hook motif nuclear-localized protein 11 of Arabidopsis thaliana (Mouse-ear cress).